The following is a 274-amino-acid chain: Rhamnulose-1-phosphate aldolase (274 aa).

The active site involves E117. Residues H141, H143, and H212 each contribute to the Zn(2+) site.

It belongs to the aldolase class II family. RhaD subfamily. As to quaternary structure, homotetramer. Zn(2+) is required as a cofactor.

The protein localises to the cytoplasm. It carries out the reaction L-rhamnulose 1-phosphate = (S)-lactaldehyde + dihydroxyacetone phosphate. It functions in the pathway carbohydrate degradation; L-rhamnose degradation; glycerone phosphate from L-rhamnose: step 3/3. In terms of biological role, catalyzes the reversible cleavage of L-rhamnulose-1-phosphate to dihydroxyacetone phosphate (DHAP) and L-lactaldehyde. In Shigella dysenteriae serotype 1 (strain Sd197), this protein is Rhamnulose-1-phosphate aldolase.